A 33-amino-acid polypeptide reads, in one-letter code: Kappa-theraphotoxin-Pg2a (33 aa).

Cystine bridges form between Cys2-Cys16, Cys9-Cys21, and Cys15-Cys28.

As to expression, expressed by the venom gland.

Its subcellular location is the secreted. In terms of biological role, gating modifier of Kv2.1/KCNB1 channels. The sequence is that of Kappa-theraphotoxin-Pg2a from Chilobrachys guangxiensis (Chinese earth tiger tarantula).